The primary structure comprises 203 residues: Small ribosomal subunit protein uS4 (203 aa).

The S4 RNA-binding domain occupies 93–153; the sequence is QRLDSVVYRL…EKSKNILPIQ (61 aa).

This sequence belongs to the universal ribosomal protein uS4 family. As to quaternary structure, part of the 30S ribosomal subunit. Contacts protein S5. The interaction surface between S4 and S5 is involved in control of translational fidelity.

Its function is as follows. One of the primary rRNA binding proteins, it binds directly to 16S rRNA where it nucleates assembly of the body of the 30S subunit. Functionally, with S5 and S12 plays an important role in translational accuracy. This chain is Small ribosomal subunit protein uS4, found in Leuconostoc mesenteroides subsp. mesenteroides (strain ATCC 8293 / DSM 20343 / BCRC 11652 / CCM 1803 / JCM 6124 / NCDO 523 / NBRC 100496 / NCIMB 8023 / NCTC 12954 / NRRL B-1118 / 37Y).